Consider the following 520-residue polypeptide: Ribonuclease Y 2 (520 aa).

Residues Val-7–Lys-23 form a helical membrane-spanning segment. Positions Asn-206–Ile-269 constitute a KH domain. The region spanning Ile-332–Ala-425 is the HD domain.

It belongs to the RNase Y family.

Its subcellular location is the cell membrane. Functionally, endoribonuclease that initiates mRNA decay. The sequence is that of Ribonuclease Y 2 from Pediococcus pentosaceus (strain ATCC 25745 / CCUG 21536 / LMG 10740 / 183-1w).